The following is a 229-amino-acid chain: Putative N-acetylmannosamine-6-phosphate 2-epimerase 2 (229 aa).

It belongs to the NanE family.

It carries out the reaction an N-acyl-D-glucosamine 6-phosphate = an N-acyl-D-mannosamine 6-phosphate. It participates in amino-sugar metabolism; N-acetylneuraminate degradation; D-fructose 6-phosphate from N-acetylneuraminate: step 3/5. Functionally, converts N-acetylmannosamine-6-phosphate (ManNAc-6-P) to N-acetylglucosamine-6-phosphate (GlcNAc-6-P). This chain is Putative N-acetylmannosamine-6-phosphate 2-epimerase 2, found in Salmonella paratyphi A (strain ATCC 9150 / SARB42).